Consider the following 312-residue polypeptide: tRNA-cytidine(32) 2-sulfurtransferase (312 aa).

The PP-loop motif signature appears at 48–53 (SGGKDS). [4Fe-4S] cluster-binding residues include cysteine 123, cysteine 126, and cysteine 214.

Belongs to the TtcA family. Homodimer. The cofactor is Mg(2+). It depends on [4Fe-4S] cluster as a cofactor.

The protein resides in the cytoplasm. The enzyme catalyses cytidine(32) in tRNA + S-sulfanyl-L-cysteinyl-[cysteine desulfurase] + AH2 + ATP = 2-thiocytidine(32) in tRNA + L-cysteinyl-[cysteine desulfurase] + A + AMP + diphosphate + H(+). It functions in the pathway tRNA modification. Catalyzes the ATP-dependent 2-thiolation of cytidine in position 32 of tRNA, to form 2-thiocytidine (s(2)C32). The sulfur atoms are provided by the cysteine/cysteine desulfurase (IscS) system. In Mannheimia succiniciproducens (strain KCTC 0769BP / MBEL55E), this protein is tRNA-cytidine(32) 2-sulfurtransferase.